Reading from the N-terminus, the 254-residue chain is Anamorsin homolog (254 aa).

Residues 4-133 (VQENNHVLYL…EVGSKSKLSF (130 aa)) are N-terminal SAM-like domain. A linker region spans residues 134–165 (AKKSNVAAVWKLDDNEEEERIDDEELLDEDDK). Residues cysteine 176, cysteine 185, cysteine 188, and cysteine 190 each contribute to the [2Fe-2S] cluster site. Residues 176–190 (CGTTGKRKACKDCSC) are fe-S binding site A. [4Fe-4S] cluster is bound by residues cysteine 215, cysteine 218, cysteine 226, and cysteine 229. Short sequence motifs (cx2C motif) lie at residues 215–218 (CGSC) and 226–229 (CATC). The interval 215–229 (CGSCYLGDAFRCATC) is fe-S binding site B.

Belongs to the anamorsin family. In terms of assembly, monomer. It depends on [2Fe-2S] cluster as a cofactor. The cofactor is [4Fe-4S] cluster.

The protein localises to the cytoplasm. It is found in the mitochondrion intermembrane space. Its function is as follows. Component of the cytosolic iron-sulfur (Fe-S) protein assembly (CIA) machinery. Required for the maturation of extramitochondrial Fe-S proteins. Part of an electron transfer chain functioning in an early step of cytosolic Fe-S biogenesis, facilitating the de novo assembly of a [4Fe-4S] cluster on the cytosolic Fe-S scaffold complex. Electrons are transferred from NADPH via a FAD- and FMN-containing diflavin oxidoreductase. Together with the diflavin oxidoreductase, also required for the assembly of the diferric tyrosyl radical cofactor of ribonucleotide reductase (RNR), probably by providing electrons for reduction during radical cofactor maturation in the catalytic small subunit. This is Anamorsin homolog from Anopheles gambiae (African malaria mosquito).